The chain runs to 448 residues: ATP-dependent protease ATPase subunit HslU (448 aa).

ATP-binding positions include Val-21, 63 to 68, Asp-261, Glu-326, and Arg-398; that span reads GVGKTE.

This sequence belongs to the ClpX chaperone family. HslU subfamily. A double ring-shaped homohexamer of HslV is capped on each side by a ring-shaped HslU homohexamer. The assembly of the HslU/HslV complex is dependent on binding of ATP.

It localises to the cytoplasm. In terms of biological role, ATPase subunit of a proteasome-like degradation complex; this subunit has chaperone activity. The binding of ATP and its subsequent hydrolysis by HslU are essential for unfolding of protein substrates subsequently hydrolyzed by HslV. HslU recognizes the N-terminal part of its protein substrates and unfolds these before they are guided to HslV for hydrolysis. The polypeptide is ATP-dependent protease ATPase subunit HslU (Persephonella marina (strain DSM 14350 / EX-H1)).